Here is a 74-residue protein sequence, read N- to C-terminus: UPF0346 protein PEPE_1063 (74 aa).

Belongs to the UPF0346 family.

The sequence is that of UPF0346 protein PEPE_1063 from Pediococcus pentosaceus (strain ATCC 25745 / CCUG 21536 / LMG 10740 / 183-1w).